The following is a 244-amino-acid chain: Probable transcriptional regulatory protein DR_2548 (244 aa).

The interval 1-23 (MAGHSKWAQIKRKKGANDKKRSA) is disordered.

It belongs to the TACO1 family.

It is found in the cytoplasm. The chain is Probable transcriptional regulatory protein DR_2548 from Deinococcus radiodurans (strain ATCC 13939 / DSM 20539 / JCM 16871 / CCUG 27074 / LMG 4051 / NBRC 15346 / NCIMB 9279 / VKM B-1422 / R1).